Reading from the N-terminus, the 379-residue chain is Cobalt-precorrin-5B C(1)-methyltransferase (379 aa).

The protein belongs to the CbiD family.

It catalyses the reaction Co-precorrin-5B + S-adenosyl-L-methionine = Co-precorrin-6A + S-adenosyl-L-homocysteine. The protein operates within cofactor biosynthesis; adenosylcobalamin biosynthesis; cob(II)yrinate a,c-diamide from sirohydrochlorin (anaerobic route): step 6/10. Its function is as follows. Catalyzes the methylation of C-1 in cobalt-precorrin-5B to form cobalt-precorrin-6A. This chain is Cobalt-precorrin-5B C(1)-methyltransferase, found in Citrobacter koseri (strain ATCC BAA-895 / CDC 4225-83 / SGSC4696).